Reading from the N-terminus, the 101-residue chain is Small ribosomal subunit protein uS14 (101 aa).

This sequence belongs to the universal ribosomal protein uS14 family. In terms of assembly, part of the 30S ribosomal subunit. Contacts proteins S3 and S10.

Its function is as follows. Binds 16S rRNA, required for the assembly of 30S particles and may also be responsible for determining the conformation of the 16S rRNA at the A site. The chain is Small ribosomal subunit protein uS14 from Enterobacter sp. (strain 638).